We begin with the raw amino-acid sequence, 211 residues long: Dihydrofolate reductase (211 aa).

One can recognise a DHFR domain in the interval 7–210; that stretch reads PIVGIVACLQ…YCFEFTLYNR (204 aa). Residues Ala-13 and 20–26 each bind NADP(+); that span reads GIGFRGG. 34 to 39 contributes to the substrate binding site; the sequence is EMKYFR. 58-60 is an NADP(+) binding site; sequence RKT. Substrate is bound at residue Arg-74. Residues 80-82 and 123-130 each bind NADP(+); these read SRS and GGGEVYSQ.

This sequence belongs to the dihydrofolate reductase family.

The catalysed reaction is (6S)-5,6,7,8-tetrahydrofolate + NADP(+) = 7,8-dihydrofolate + NADPH + H(+). Its pathway is cofactor biosynthesis; tetrahydrofolate biosynthesis; 5,6,7,8-tetrahydrofolate from 7,8-dihydrofolate: step 1/1. In terms of biological role, key enzyme in folate metabolism. Catalyzes an essential reaction for de novo glycine and purine synthesis, and for DNA precursor synthesis. In Saccharomyces cerevisiae (strain ATCC 204508 / S288c) (Baker's yeast), this protein is Dihydrofolate reductase (DFR1).